A 413-amino-acid chain; its full sequence is Serine/threonine-protein kinase ppk27 (413 aa).

The Protein kinase domain maps to 102-403 (WSINTKITST…LKDFNKHGNF (302 aa)). ATP is bound by residues 108 to 116 (ITSTEQREV) and K133. The active-site Proton acceptor is the D231.

It belongs to the protein kinase superfamily. Ser/Thr protein kinase family.

The protein localises to the cytoplasm. The catalysed reaction is L-seryl-[protein] + ATP = O-phospho-L-seryl-[protein] + ADP + H(+). It carries out the reaction L-threonyl-[protein] + ATP = O-phospho-L-threonyl-[protein] + ADP + H(+). The polypeptide is Serine/threonine-protein kinase ppk27 (ppk27) (Schizosaccharomyces pombe (strain 972 / ATCC 24843) (Fission yeast)).